A 487-amino-acid chain; its full sequence is Aspartyl/glutamyl-tRNA(Asn/Gln) amidotransferase subunit B (487 aa).

Belongs to the GatB/GatE family. GatB subfamily. As to quaternary structure, heterotrimer of A, B and C subunits.

It carries out the reaction L-glutamyl-tRNA(Gln) + L-glutamine + ATP + H2O = L-glutaminyl-tRNA(Gln) + L-glutamate + ADP + phosphate + H(+). The enzyme catalyses L-aspartyl-tRNA(Asn) + L-glutamine + ATP + H2O = L-asparaginyl-tRNA(Asn) + L-glutamate + ADP + phosphate + 2 H(+). Functionally, allows the formation of correctly charged Asn-tRNA(Asn) or Gln-tRNA(Gln) through the transamidation of misacylated Asp-tRNA(Asn) or Glu-tRNA(Gln) in organisms which lack either or both of asparaginyl-tRNA or glutaminyl-tRNA synthetases. The reaction takes place in the presence of glutamine and ATP through an activated phospho-Asp-tRNA(Asn) or phospho-Glu-tRNA(Gln). The protein is Aspartyl/glutamyl-tRNA(Asn/Gln) amidotransferase subunit B of Acidiphilium cryptum (strain JF-5).